Here is a 420-residue protein sequence, read N- to C-terminus: MGSRTVGWWLLAAAVVLAAAAADSGEAERAAEQHSERISGSAGDVLEDNPVGRLKVFIYDLPRKYNKKMVNKDPRCLNHMFAAEIFMHRFLLSSAVRTLNPKEADWFYTPVYTTCDLTPAGLPLPFKSPRVMRSAIQYISHKWPFWNRTDGADHFFVVPHDFGACFHYQEEKAIERGILPLLQRATLVQTFGQENHVCLKEGSITIPPYAPPQKMQAHLIPPDTPRSIFVYFRGLFYDTGNDPEGGYYARGARASLWENFKNNPLFDISTDHPPTYYEDMQRAVFCLCPLGWAPWSPRLVEAVVFGCIPVIIADDIVLPFADAIPWEEIGVFVEEKDVPKLDTILTSMPIDDILRKQRLLANPSMKQAMLFPQPAQPRDAFHQILNGLARKLPHPEGVYLQPSDKRLNWTAGPVGDLKAW.

Over 1 to 4 the chain is Cytoplasmic; the sequence is MGSR. Residues 5–25 form a helical; Signal-anchor for type II membrane protein membrane-spanning segment; sequence TVGWWLLAAAVVLAAAAADSG. Residues 26–420 are Lumenal-facing; that stretch reads EAERAAEQHS…AGPVGDLKAW (395 aa). 2 N-linked (GlcNAc...) asparagine glycosylation sites follow: Asn147 and Asn408.

The protein belongs to the glycosyltransferase 47 family.

It localises to the golgi apparatus membrane. Functionally, involved in the synthesis of glucuronoxylan hemicellulose in secondary cell walls. The chain is Probable glucuronosyltransferase Os04g0398600 from Oryza sativa subsp. japonica (Rice).